The primary structure comprises 118 residues: Ribonuclease P protein component (118 aa).

This sequence belongs to the RnpA family. In terms of assembly, consists of a catalytic RNA component (M1 or rnpB) and a protein subunit.

It catalyses the reaction Endonucleolytic cleavage of RNA, removing 5'-extranucleotides from tRNA precursor.. Functionally, RNaseP catalyzes the removal of the 5'-leader sequence from pre-tRNA to produce the mature 5'-terminus. It can also cleave other RNA substrates such as 4.5S RNA. The protein component plays an auxiliary but essential role in vivo by binding to the 5'-leader sequence and broadening the substrate specificity of the ribozyme. This Shewanella sp. (strain ANA-3) protein is Ribonuclease P protein component.